The following is a 543-amino-acid chain: Chaperonin GroEL 2 (543 aa).

ATP is bound by residues 29 to 32 (TLGP), 86 to 90 (DGTTT), G413, 478 to 480 (NAA), and D494.

Belongs to the chaperonin (HSP60) family. Forms a cylinder of 14 subunits composed of two heptameric rings stacked back-to-back. Interacts with the co-chaperonin GroES.

The protein resides in the cytoplasm. It carries out the reaction ATP + H2O + a folded polypeptide = ADP + phosphate + an unfolded polypeptide.. Functionally, together with its co-chaperonin GroES, plays an essential role in assisting protein folding. The GroEL-GroES system forms a nano-cage that allows encapsulation of the non-native substrate proteins and provides a physical environment optimized to promote and accelerate protein folding. This is Chaperonin GroEL 2 from Thermosynechococcus vestitus (strain NIES-2133 / IAM M-273 / BP-1).